The primary structure comprises 234 residues: Ribose-5-phosphate isomerase A (234 aa).

Substrate-binding positions include 35–38, 91–94, and 105–108; these read SGTT, DGAD, and KGGG. Catalysis depends on Glu114, which acts as the Proton acceptor. A substrate-binding site is contributed by Lys132.

The protein belongs to the ribose 5-phosphate isomerase family. As to quaternary structure, homodimer.

It catalyses the reaction aldehydo-D-ribose 5-phosphate = D-ribulose 5-phosphate. The protein operates within carbohydrate degradation; pentose phosphate pathway; D-ribose 5-phosphate from D-ribulose 5-phosphate (non-oxidative stage): step 1/1. In terms of biological role, catalyzes the reversible conversion of ribose-5-phosphate to ribulose 5-phosphate. This chain is Ribose-5-phosphate isomerase A, found in Methanococcus aeolicus (strain ATCC BAA-1280 / DSM 17508 / OCM 812 / Nankai-3).